A 198-amino-acid polypeptide reads, in one-letter code: Syndecan-4 (198 aa).

Positions 1–18 (MAPARLFALLLLFVGGVA) are cleaved as a signal peptide. Residues 19–145 (ESIRETEVID…QGSNIFERTE (127 aa)) are Extracellular-facing. O-linked (Xyl...) (glycosaminoglycan) serine glycosylation is found at Ser39, Ser61, and Ser63. Ser95 carries O-linked (Xyl...) (chondroitin sulfate) serine glycosylation. A helical membrane pass occupies residues 146 to 170 (VLAALIVGGIVGILFAVFLILLLMY). Over 171-198 (RMKKKDEGSYDLGKKPIYKKAPTNEFYA) the chain is Cytoplasmic.

It belongs to the syndecan proteoglycan family. As to quaternary structure, homodimer. Interacts with CDCP1 and SDCBP. Interacts (via its cytoplasmic domain) with GIPC (via its PDZ domain). Interacts (via its cytoplasmic domain) with NUDT16L1. Interacts with DNM2; this interaction is markedly enhanced at focal ahesion site upon induction of focal adhesions and stress-fiber formation. Post-translationally, shedding is enhanced by a number of factors such as heparanase, thrombin or EGF. Also by stress and wound healing. PMA-mediated shedding is inhibited by TIMP3. O-glycosylated; contains both chondroitin sulfate and heparan sulfate. Ser-39, Ser-61 and Ser-63 can all be modified by either chondroitin sulfate or heparan sulfate, and the protein exists in forms that contain only chondroitin sulfate, only heparan sulfate and both chondroitin sulfate and heparan sulfate.

The protein resides in the membrane. The protein localises to the secreted. Functionally, cell surface proteoglycan which regulates exosome biogenesis in concert with SDCBP and PDCD6IP. The chain is Syndecan-4 from Pongo abelii (Sumatran orangutan).